A 457-amino-acid polypeptide reads, in one-letter code: Putative zinc finger CCCH domain-containing protein 21 (457 aa).

Disordered stretches follow at residues 51 to 73, 102 to 130, 195 to 221, and 280 to 329; these read PTSS…ARAS, LESP…EKLL, TSPS…ERER, and RKQA…RLRV. Residues 57 to 66 show a composition bias toward gly residues; it reads DGGGGGGGGY. A coiled-coil region spans residues 215-276; it reads ASAEREREVR…HLSLLLEELE (62 aa). 2 C3H1-type zinc fingers span residues 382 to 409 and 419 to 447; these read AAKT…HGLQ and RYKT…HSPL.

The chain is Putative zinc finger CCCH domain-containing protein 21 from Oryza sativa subsp. japonica (Rice).